A 332-amino-acid chain; its full sequence is Transcription factor ZEB2 (332 aa).

Residues 1–37 (MQSTESFHALPTRSDVEDPNERRKIQNRIAQKKHRQK) are disordered. Over residues 14–24 (SDVEDPNERRK) the composition is skewed to basic and acidic residues. Residues 17–50 (EDPNERRKIQNRIAQKKHRQKMKRRIEELETKVN) enclose the bZIP domain. Positions 21-43 (ERRKIQNRIAQKKHRQKMKRRIE) are basic motif. Residues 45–52 (LETKVNNQ) form a leucine-zipper region. A disordered region spans residues 106 to 170 (MHDSPRPNQQ…EGSLPTRQHD (65 aa)). The segment covering 111-134 (RPNQQQRLSVSGMPSSPTSTSNVA) has biased composition (polar residues). Low complexity predominate over residues 143–155 (HSSASNHLSSLSL). Residues 160-170 (TEGSLPTRQHD) show a composition bias toward polar residues.

This sequence belongs to the bZIP family.

Its subcellular location is the nucleus. Transcription factor that specifically controls transcription of the zearalenone biosynthesis cluster genes. This is Transcription factor ZEB2 from Gibberella zeae (strain ATCC MYA-4620 / CBS 123657 / FGSC 9075 / NRRL 31084 / PH-1) (Wheat head blight fungus).